The primary structure comprises 159 residues: 2-C-methyl-D-erythritol 2,4-cyclodiphosphate synthase (159 aa).

Positions 8 and 10 each coordinate a divalent metal cation. 4-CDP-2-C-methyl-D-erythritol 2-phosphate contacts are provided by residues 8 to 10 (DVH) and 34 to 35 (HS). H42 contacts a divalent metal cation. 4-CDP-2-C-methyl-D-erythritol 2-phosphate-binding positions include 56 to 58 (DIG), 61 to 65 (FPDTD), 100 to 106 (AQAPRML), 132 to 135 (TTTE), F139, and R142.

The protein belongs to the IspF family. Homotrimer. A divalent metal cation is required as a cofactor.

The catalysed reaction is 4-CDP-2-C-methyl-D-erythritol 2-phosphate = 2-C-methyl-D-erythritol 2,4-cyclic diphosphate + CMP. It participates in isoprenoid biosynthesis; isopentenyl diphosphate biosynthesis via DXP pathway; isopentenyl diphosphate from 1-deoxy-D-xylulose 5-phosphate: step 4/6. Its function is as follows. Involved in the biosynthesis of isopentenyl diphosphate (IPP) and dimethylallyl diphosphate (DMAPP), two major building blocks of isoprenoid compounds. Catalyzes the conversion of 4-diphosphocytidyl-2-C-methyl-D-erythritol 2-phosphate (CDP-ME2P) to 2-C-methyl-D-erythritol 2,4-cyclodiphosphate (ME-CPP) with a corresponding release of cytidine 5-monophosphate (CMP). The protein is 2-C-methyl-D-erythritol 2,4-cyclodiphosphate synthase of Escherichia coli O6:K15:H31 (strain 536 / UPEC).